The primary structure comprises 754 residues: 1,4-alpha-glucan branching enzyme GlgB (754 aa).

D431 functions as the Nucleophile in the catalytic mechanism. The Proton donor role is filled by E484.

Belongs to the glycosyl hydrolase 13 family. GlgB subfamily. In terms of assembly, monomer.

The enzyme catalyses Transfers a segment of a (1-&gt;4)-alpha-D-glucan chain to a primary hydroxy group in a similar glucan chain.. It participates in glycan biosynthesis; glycogen biosynthesis. Its function is as follows. Catalyzes the formation of the alpha-1,6-glucosidic linkages in glycogen by scission of a 1,4-alpha-linked oligosaccharide from growing alpha-1,4-glucan chains and the subsequent attachment of the oligosaccharide to the alpha-1,6 position. This Prochlorococcus marinus subsp. pastoris (strain CCMP1986 / NIES-2087 / MED4) protein is 1,4-alpha-glucan branching enzyme GlgB.